Reading from the N-terminus, the 195-residue chain is O-methyltransferase (195 aa).

Belongs to the methyltransferase superfamily.

The protein operates within secondary metabolite biosynthesis. Functionally, O-methyltransferase; part of the gene cluster that mediates the biosynthesis of pyrophen and campyrone B, which represent a class of fungal amino acid-derived alpha-pyrone natural products. The first step of pyrophen biosynthesis is catalyzed by the PKS-NRPS hybrid synthetase ATPKS that uptakes and condensates L-phenylalanine and malonyl-CoA in order to produce desmethyldesacetylpyrophen. Although the A domain does not discriminate between 2 enantiomeric phenylalanines, the downstream KS domain must play a gate keeping role to stereoselectively accept the L-phenylalanyl-S-phosphopantetheine (Ppant)-T domain intermediate for chain elongation. The resulting amino acid derived diketide is off-loaded through lactonization to yield the alpha-pyrone intermediate desmethyldesacetylpyrophen. The cluster-specific O-methyltransferase (OMT) then methylates desmethyldesacetylpyrophen to desacetylpyrophen, which is further acetylated to pyrophen by an endogenous yet unidentified N-acetyltransferase. ATPKS has relaxed substrate specificity to activate and extend branched-chain amino acid L-leucine to produce small amounts of campyrone B. The protein is O-methyltransferase of Aspergillus niger (strain ATCC 1015 / CBS 113.46 / FGSC A1144 / LSHB Ac4 / NCTC 3858a / NRRL 328 / USDA 3528.7).